A 219-amino-acid chain; its full sequence is MLIAVPLDDTNFSENLKKAKEKGADIVELRVDQFSDTSLNYVKEKLEEVHSQGLKTILTIRSPEEGGREVKNREELFEELSPLSDYTDIELSSRGLLVKLYNITKEAGKKLIISYHNFELTPPNWIIREVLREGYRYGGIPKIAVKANSYEDVARLLCISRQVEGEKILISMGDYGKISRLAGYVFGSVITYCSLEKAFAPGQIPLEEMVELRKKFYRL.

3-dehydroquinate contacts are provided by residues 28–30 (ELR) and Arg-61. His-116 (proton donor/acceptor) is an active-site residue. The Schiff-base intermediate with substrate role is filled by Lys-142. 3-dehydroquinate contacts are provided by Arg-180 and Gln-203.

Belongs to the type-I 3-dehydroquinase family. In terms of assembly, homodimer.

It carries out the reaction 3-dehydroquinate = 3-dehydroshikimate + H2O. Its pathway is metabolic intermediate biosynthesis; chorismate biosynthesis; chorismate from D-erythrose 4-phosphate and phosphoenolpyruvate: step 3/7. Involved in the third step of the chorismate pathway, which leads to the biosynthesis of aromatic amino acids. Catalyzes the cis-dehydration of 3-dehydroquinate (DHQ) and introduces the first double bond of the aromatic ring to yield 3-dehydroshikimate. This is 3-dehydroquinate dehydratase from Aquifex aeolicus (strain VF5).